The following is a 309-amino-acid chain: ASC1-like protein 1 (309 aa).

The next 6 helical transmembrane spans lie at 27-47 (FFALPLFAVFFLVVRYLLDCF), 84-104 (CVYFLSGEILSLSVTYNEPWF), 130-150 (AVYMYAAGFYTYSIFALMFWE), 156-176 (FGVSMSHHVATVALIVLSYVF), 215-235 (FLLFVVSWVLLRLTYFPFWIL), and 260-280 (YVFNSLLFSLLVLHIYWWVLI). A TLC domain is found at 75-289 (RKFKESAWKC…IYRMLVRQIK (215 aa)).

The protein resides in the endoplasmic reticulum membrane. In terms of biological role, mediates resistance to sphinganine-analog mycotoxins (SAMs) by restoring the sphingolipid biosynthesis. Could salvage the transport of GPI-anchored proteins from the endoplasmic reticulum to the Golgi apparatus in ceramides-depleted cells after SAM exposure. This is ASC1-like protein 1 from Oryza sativa subsp. japonica (Rice).